A 66-amino-acid polypeptide reads, in one-letter code: UPF0391 membrane protein AM1_5042 (66 aa).

The next 2 membrane-spanning stretches (helical) occupy residues 4–24 (LTLT…SGIA) and 28–47 (AAIA…LVWP).

It belongs to the UPF0391 family.

The protein localises to the cell membrane. In Acaryochloris marina (strain MBIC 11017), this protein is UPF0391 membrane protein AM1_5042.